The chain runs to 390 residues: NADH-quinone oxidoreductase subunit D (390 aa).

The protein belongs to the complex I 49 kDa subunit family. In terms of assembly, NDH-1 is composed of 14 different subunits. Subunits NuoB, C, D, E, F, and G constitute the peripheral sector of the complex.

It localises to the cell inner membrane. It carries out the reaction a quinone + NADH + 5 H(+)(in) = a quinol + NAD(+) + 4 H(+)(out). Functionally, NDH-1 shuttles electrons from NADH, via FMN and iron-sulfur (Fe-S) centers, to quinones in the respiratory chain. The immediate electron acceptor for the enzyme in this species is believed to be ubiquinone. Couples the redox reaction to proton translocation (for every two electrons transferred, four hydrogen ions are translocated across the cytoplasmic membrane), and thus conserves the redox energy in a proton gradient. In Geobacter sulfurreducens (strain ATCC 51573 / DSM 12127 / PCA), this protein is NADH-quinone oxidoreductase subunit D.